Reading from the N-terminus, the 411-residue chain is Serine--tRNA ligase (411 aa).

226 to 228 (TSE) serves as a coordination point for L-serine. An ATP-binding site is contributed by 257–259 (RKE). Residue Glu-280 coordinates L-serine. Residue 344-347 (EISS) coordinates ATP. Ser-379 contributes to the L-serine binding site.

It belongs to the class-II aminoacyl-tRNA synthetase family. Type-1 seryl-tRNA synthetase subfamily. Homodimer. The tRNA molecule binds across the dimer.

It is found in the cytoplasm. It catalyses the reaction tRNA(Ser) + L-serine + ATP = L-seryl-tRNA(Ser) + AMP + diphosphate + H(+). It carries out the reaction tRNA(Sec) + L-serine + ATP = L-seryl-tRNA(Sec) + AMP + diphosphate + H(+). It participates in aminoacyl-tRNA biosynthesis; selenocysteinyl-tRNA(Sec) biosynthesis; L-seryl-tRNA(Sec) from L-serine and tRNA(Sec): step 1/1. Its function is as follows. Catalyzes the attachment of serine to tRNA(Ser). Is also able to aminoacylate tRNA(Sec) with serine, to form the misacylated tRNA L-seryl-tRNA(Sec), which will be further converted into selenocysteinyl-tRNA(Sec). This chain is Serine--tRNA ligase, found in Campylobacter jejuni (strain RM1221).